The primary structure comprises 246 residues: 1-(5-phosphoribosyl)-5-[(5-phosphoribosylamino)methylideneamino] imidazole-4-carboxamide isomerase (246 aa).

Catalysis depends on aspartate 8, which acts as the Proton acceptor. Aspartate 131 (proton donor) is an active-site residue.

The protein belongs to the HisA/HisF family.

The protein localises to the cytoplasm. It catalyses the reaction 1-(5-phospho-beta-D-ribosyl)-5-[(5-phospho-beta-D-ribosylamino)methylideneamino]imidazole-4-carboxamide = 5-[(5-phospho-1-deoxy-D-ribulos-1-ylimino)methylamino]-1-(5-phospho-beta-D-ribosyl)imidazole-4-carboxamide. The protein operates within amino-acid biosynthesis; L-histidine biosynthesis; L-histidine from 5-phospho-alpha-D-ribose 1-diphosphate: step 4/9. The sequence is that of 1-(5-phosphoribosyl)-5-[(5-phosphoribosylamino)methylideneamino] imidazole-4-carboxamide isomerase from Bordetella avium (strain 197N).